The following is a 589-amino-acid chain: Capsid scaffolding protein (589 aa).

Residues H47, S118, and H142 each act as charge relay system in the active site. Residues 264 to 273 (EKERPKEPEQ) show a composition bias toward basic and acidic residues. Residues 264-283 (EKERPKEPEQSHVPTESMSH) form a disordered region. Residues 307–326 (HDGVYLPKDAFFSLIGASRP) are interaction with pAP. Disordered stretches follow at residues 421 to 478 (RSRS…GDRY) and 514 to 552 (ASPT…AERG). Short sequence motifs (nuclear localization signal) lie at residues 428 to 433 (KRRRER) and 453 to 459 (KARKRLK). Positions 453 to 462 (KARKRLKAHH) are enriched in basic residues. Residues 514 to 543 (ASPTTTTSHQAEASEPQASTAAAAPSTASS) show a composition bias toward low complexity. An interaction with major capsid protein region spans residues 569–589 (PPKDMVDLNRRLFVAALNKME).

The protein belongs to the herpesviridae capsid scaffolding protein family. In terms of assembly, homomultimer. Interacts with major capsid protein. Exists in a monomer-dimer equilibrium with the dimer being the active species. In terms of processing, capsid scaffolding protein is cleaved by assemblin after formation of the spherical procapsid. As a result, the capsid obtains its mature, icosahedral shape. Cleavages occur at two or more sites: release (R-site) and maturation (M-site).

The protein localises to the host cytoplasm. The protein resides in the host nucleus. The catalysed reaction is Cleaves -Ala-|-Ser- and -Ala-|-Ala- bonds in the scaffold protein.. Its function is as follows. Acts as a scaffold protein by binding major capsid protein in the cytoplasm, inducing the nuclear localization of both proteins. Multimerizes in the nucleus such as major capsid protein forms the icosahedral T=16 capsid. Autocatalytic cleavage releases the assembly protein, and subsequently abolishes interaction with major capsid protein. Cleavages products are evicted from the capsid before or during DNA packaging. Functionally, protease that plays an essential role in virion assembly within the nucleus. Catalyzes the cleavage of the assembly protein after formation of the spherical procapsid. By that cleavage, the capsid matures and gains its icosahedral shape. The cleavage sites seem to include -Ala-Ser-, -Ala-Ala-, as well as Ala-Thr bonds. Assemblin and cleavages products are evicted from the capsid before or during DNA packaging. Plays a major role in capsid assembly. Acts as a scaffold protein by binding major capsid protein. Multimerizes in the nucleus such as major capsid protein forms the icosahedral T=16 capsid. Cleaved by assemblin after capsid completion. The cleavages products are evicted from the capsid before or during DNA packaging. The protein is Capsid scaffolding protein (UL80) of Simian cytomegalovirus (strain Colburn).